A 325-amino-acid polypeptide reads, in one-letter code: tRNA uridine(34) hydroxylase (325 aa).

The 97-residue stretch at 122 to 218 folds into the Rhodanese domain; that stretch reads EENRCLVLDV…YGQAMGTGKW (97 aa). The active-site Cysteine persulfide intermediate is the Cys178.

Belongs to the TrhO family.

The catalysed reaction is uridine(34) in tRNA + AH2 + O2 = 5-hydroxyuridine(34) in tRNA + A + H2O. Its function is as follows. Catalyzes oxygen-dependent 5-hydroxyuridine (ho5U) modification at position 34 in tRNAs. This chain is tRNA uridine(34) hydroxylase, found in Chlamydia felis (strain Fe/C-56) (Chlamydophila felis).